The following is an 83-amino-acid chain: Colicin-E5 immunity protein (83 aa).

In terms of biological role, this protein is able to protect a cell, which harbors the plasmid ColE5 encoding colicin E5, against colicin E5. The polypeptide is Colicin-E5 immunity protein (imm) (Escherichia coli).